A 150-amino-acid polypeptide reads, in one-letter code: Arginine repressor (150 aa).

Belongs to the ArgR family.

It is found in the cytoplasm. It functions in the pathway amino-acid biosynthesis; L-arginine biosynthesis [regulation]. In terms of biological role, regulates arginine biosynthesis genes. In Staphylococcus saprophyticus subsp. saprophyticus (strain ATCC 15305 / DSM 20229 / NCIMB 8711 / NCTC 7292 / S-41), this protein is Arginine repressor.